Reading from the N-terminus, the 633-residue chain is Cyclic GMP-AMP synthase-like receptor 1 (633 aa).

Disordered regions lie at residues 23–80 (KVHG…HPHT), 107–214 (FKGP…TDPF), and 250–276 (REDDKSDQEKRDSWKRREGSVDDRPSS). Residues 29-67 (KQHESAHPPRERHTERTATKRSDETKTASRPTASHEGKT) show a composition bias toward basic and acidic residues. Residues 68 to 80 (HTTNPRGQVHPHT) are compositionally biased toward polar residues. Composition is skewed to basic and acidic residues over residues 125–143 (RKPETPKKPHSATKDDHRT), 176–194 (RKPDTPKKPHSATKDDHRT), and 250–274 (REDDKSDQEKRDSWKRREGSVDDRP). Mg(2+)-binding residues include Glu-353, Asp-355, and Asp-455.

This sequence belongs to the mab-21 family. Mg(2+) serves as cofactor. The cofactor is Mn(2+).

The enzyme catalyses UTP + ATP = 2',3'-cUAMP + 2 diphosphate. Nucleotidyltransferase that catalyzes the formation of cyclic UMP-AMP (2',3'-cUAMP) from ATP and UTP and plays a key role in innate immunity. Acts as a key sensor of double-stranded DNA (dsDNA), the presence of dsDNA in the cytoplasm being a danger signal that triggers the immune responses. Directly binds dsDNA, activating the nucleotidyltransferase activity, leading to synthesis of 2',3'-cUAMP, a second messenger that binds to and activates Sting, thereby triggering the immune response via activation of the NF-kappa-B transcription factor. This Crassostrea virginica (Eastern oyster) protein is Cyclic GMP-AMP synthase-like receptor 1.